The primary structure comprises 470 residues: Cytochrome P450 monooxygenase sirC (470 aa).

Residues 12-34 traverse the membrane as a helical segment; it reads LRGMVVGTIMLLCYRYGLALSIL. N-linked (GlcNAc...) asparagine glycosylation occurs at asparagine 399. Cysteine 410 provides a ligand contact to heme.

The protein belongs to the cytochrome P450 family. Heme is required as a cofactor.

It is found in the membrane. It participates in mycotoxin biosynthesis. Its function is as follows. Cytochrome P450 monooxygenase; part of the gene cluster that mediates the biosynthesis of sirodesmin PL, an epipolythiodioxopiperazine (ETP) characterized by a disulfide bridged cyclic dipeptide and that acts as a phytotoxin which is involved in the blackleg didease of canola. SirD catalyzes the O-prenylation of L-tyrosine (L-Tyr) in the presence of dimethylallyl diphosphate (DMAPP) to yield 4-O-dimethylallyl-L-Tyr, and therefore represents probably the first pathway-specific enzyme in the biosynthesis of sirodesmin PL. 4-O-dimethylallyl-L-Tyr, then undergoes condensation with L-Ser in a reaction catalyzed by the non-ribosomal peptide synthase sirP to form the diketopiperazine (DKP) backbone. Further bishydroxylation of the DKP performed by the cytochrome P450 monooxygenase sirC leads to the production of the intermediate phomamide. This step is essential to form the reactive thiol group required for toxicity of sirodesmin PL. The next steps of sirodesmin biosynthesis are not well understood yet, but some predictions could be made from intermediate compounds identification. Phomamide is converted into phomalizarine via oxidation, probably by sirT. Further oxidation, methylation (by sirM or sirN) and reduction steps convert phomalizarine to deacetyl sirodesmin. Finally, acetyltransferase sirH probably acetylates deacetyl sirodesmin to produce sirodesmin PL. This is Cytochrome P450 monooxygenase sirC from Leptosphaeria maculans (Blackleg fungus).